The following is a 260-amino-acid chain: Na(+)-translocating NADH-quinone reductase subunit C (260 aa).

The chain crosses the membrane as a helical span at residues 12–32 (LLVIILLSLACSIIVAGSAVL). T226 carries the FMN phosphoryl threonine modification.

It belongs to the NqrC family. As to quaternary structure, composed of six subunits; NqrA, NqrB, NqrC, NqrD, NqrE and NqrF. FMN serves as cofactor.

Its subcellular location is the cell inner membrane. It catalyses the reaction a ubiquinone + n Na(+)(in) + NADH + H(+) = a ubiquinol + n Na(+)(out) + NAD(+). Functionally, NQR complex catalyzes the reduction of ubiquinone-1 to ubiquinol by two successive reactions, coupled with the transport of Na(+) ions from the cytoplasm to the periplasm. NqrA to NqrE are probably involved in the second step, the conversion of ubisemiquinone to ubiquinol. The chain is Na(+)-translocating NADH-quinone reductase subunit C from Pasteurella multocida (strain Pm70).